The primary structure comprises 176 residues: Transcription factor E (176 aa).

The 85-residue stretch at 5 to 89 (IDQLMKDMAR…YWKANVDQIN (85 aa)) folds into the HTH TFE/IIEalpha-type domain.

The protein belongs to the TFE family. In terms of assembly, monomer. Interaction with RNA polymerase subunits RpoF and RpoE is necessary for Tfe stimulatory transcription activity. Able to interact with Tbp and RNA polymerase in the absence of DNA promoter. Interacts both with the preinitiation and elongation complexes.

In terms of biological role, transcription factor that plays a role in the activation of archaeal genes transcribed by RNA polymerase. Facilitates transcription initiation by enhancing TATA-box recognition by TATA-box-binding protein (Tbp), and transcription factor B (Tfb) and RNA polymerase recruitment. Not absolutely required for transcription in vitro, but particularly important in cases where Tbp or Tfb function is not optimal. It dynamically alters the nucleic acid-binding properties of RNA polymerases by stabilizing the initiation complex and destabilizing elongation complexes. Seems to translocate with the RNA polymerase following initiation and acts by binding to the non template strand of the transcription bubble in elongation complexes. The chain is Transcription factor E from Metallosphaera sedula (strain ATCC 51363 / DSM 5348 / JCM 9185 / NBRC 15509 / TH2).